The sequence spans 109 residues: Non-structural protein of 12.7 kDa (109 aa).

It belongs to the coronaviruses ns12.7 protein family.

In Sus scrofa (Pig), this protein is Non-structural protein of 12.7 kDa.